The sequence spans 761 residues: Neutral ceramidase (761 aa).

At 1 to 11 (MAKRTFSSLEA) the chain is on the cytoplasmic side. Residues 12–32 (FLIFLLVMMTAITVALLTLLF) traverse the membrane as a helical; Signal-anchor for type II membrane protein segment. At 33–761 (VTSGTIENHK…ISSPFEIVTT (729 aa)) the chain is on the lumenal side. A disordered region spans residues 43 to 76 (DSGNHWVSTTQGPTTTQSSPTTQTPTTQTPDLPP). Residues 50–76 (STTQGPTTTQSSPTTQTPTTQTPDLPP) show a composition bias toward low complexity. O-linked (GalNAc...) threonine glycans are attached at residues T51, T52, T56, T57, and T58. S60 and S61 each carry an O-linked (GalNAc...) serine glycan. O-linked (GalNAc...) threonine glycosylation is found at T63, T64, T66, T68, T69, and T71. Position 115 (L115) interacts with Ca(2+). Position 175 (H175) interacts with Zn(2+). N198 carries an N-linked (GlcNAc...) asparagine glycan. H284 contributes to the Zn(2+) binding site. The active-site Nucleophile is the S335. Intrachain disulfides connect C343-C357 and C350-C365. N-linked (GlcNAc...) asparagine glycosylation is found at N412 and N449. The cysteines at positions 429 and 479 are disulfide-linked. Residues E521 and Y560 each contribute to the Zn(2+) site. Ca(2+) is bound by residues D693, S695, and T698. The tract at residues 751–761 (GISSPFEIVTT) is required for correct folding and localization.

The protein belongs to the neutral ceramidase family. It depends on Zn(2+) as a cofactor. Proteolytic cleavage of the N-terminus removes the signal-anchor and produces a soluble form of the protein. Post-translationally, N-glycosylated. Required for enzyme activity. In terms of processing, O-glycosylated. Required to retain it as a type II membrane protein at the cell surface. Phosphorylated. May prevent ubiquitination and subsequent degradation. Post-translationally, ubiquitinated, leading to its degradation by the proteasome. Ubiquitination is triggered by nitric oxide. As to expression, highly expressed in brain, kidney and heart. Expressed at lower level in other tissues such as liver. Expressed in intestine, kidney and liver (at protein level). Localizes in the epithelia of the jejunum and ileum.

Its subcellular location is the cell membrane. The protein resides in the membrane raft. It localises to the membrane. The protein localises to the caveola. It is found in the golgi apparatus membrane. Its subcellular location is the mitochondrion. The protein resides in the secreted. It localises to the extracellular exosome. The enzyme catalyses an N-acylsphing-4-enine + H2O = sphing-4-enine + a fatty acid. The catalysed reaction is N-hexadecanoylsphing-4-enine + H2O = sphing-4-enine + hexadecanoate. It carries out the reaction N-tetradecanoylsphing-4-enine + H2O = tetradecanoate + sphing-4-enine. It catalyses the reaction N-(9Z-octadecenoyl)-sphing-4-enine + H2O = sphing-4-enine + (9Z)-octadecenoate. The enzyme catalyses N-(15Z-tetracosenoyl)-sphing-4-enine + H2O = (15Z)-tetracosenoate + sphing-4-enine. The catalysed reaction is N-octanoylsphing-4-enine + H2O = octanoate + sphing-4-enine. It carries out the reaction N-dodecanoylsphing-4-enine + H2O = dodecanoate + sphing-4-enine. It catalyses the reaction N-(hexanoyl)sphing-4-enine + H2O = hexanoate + sphing-4-enine. The enzyme catalyses N-octadecanoylsphing-4-enine + H2O = sphing-4-enine + octadecanoate. The catalysed reaction is sphinganine + hexadecanoate = N-hexadecanoylsphinganine + H2O. It carries out the reaction N-(octadecanoyl)-sphinganine + H2O = sphinganine + octadecanoate. Its pathway is lipid metabolism; sphingolipid metabolism. Its activity is regulated as follows. The reverse reaction is inhibited by Zn(2+) and Cu(2+). Inhibited by cardiolipin and phosphatidic acid. Its function is as follows. Plasma membrane ceramidase that hydrolyzes sphingolipid ceramides into sphingosine and free fatty acids at neutral pH. Ceramides, sphingosine, and its phosphorylated form sphingosine-1-phosphate are bioactive lipids that mediate cellular signaling pathways regulating several biological processes including cell proliferation, apoptosis and differentiation. Also catalyzes the reverse reaction allowing the synthesis of ceramides from fatty acids and sphingosine. Together with sphingomyelinase, participates in the production of sphingosine and sphingosine-1-phosphate from the degradation of sphingomyelin, a sphingolipid enriched in the plasma membrane of cells. Also participates in the hydrolysis of ceramides from the extracellular milieu allowing the production of sphingosine-1-phosphate inside and outside cells. This is the case for instance with the digestion of dietary sphingolipids in the intestinal tract. The sequence is that of Neutral ceramidase (Asah2) from Rattus norvegicus (Rat).